The sequence spans 2399 residues: Norsolorinic acid synthase (2399 aa).

A starter unit:ACP transacylase (SAT) domain region spans residues 10–247; that stretch reads LVFGDQTYDF…RQIPIYVPAH (238 aa). The Ketosynthase family 3 (KS3) domain maps to 372-805; the sequence is KSKLAIVSMS…GGNTALLIED (434 aa). Active-site for beta-ketoacyl synthase activity residues include Cys544, His679, and His722. The segment at 905–1192 is malonyl-CoA:ACP transacylase (MAT) domain; that stretch reads FAFTGQGSQY…LCGMIKNILG (288 aa). Residue Ser995 is the For acyl/malonyl transferase activity of the active site. The tract at residues 1307-1327 is disordered; sequence VQEAPAAKTETKKMSKLDPTK. A compositionally biased stretch (basic and acidic residues) spans 1315-1327; the sequence is TETKKMSKLDPTK. The N-terminal hotdog fold stretch occupies residues 1340–1483; the sequence is HKVIEEKTEP…CTVRFTTDSQ (144 aa). The 319-residue stretch at 1340 to 1658 folds into the PKS/mFAS DH domain; that stretch reads HKVIEEKTEP…LRSVPRKALR (319 aa). Residues 1353–1658 are product template (PT) domain; the sequence is QFTVETDISR…LRSVPRKALR (306 aa). Residue His1372 is the Proton acceptor; for dehydratase activity of the active site. A C-terminal hotdog fold region spans residues 1510–1658; the sequence is LTHYNTKSGY…LRSVPRKALR (149 aa). Asp1570 functions as the Proton donor; for dehydratase activity in the catalytic mechanism. The tract at residues 1665 to 1734 is disordered; sequence MDKGIRQRGG…AALKASVPKA (70 aa). Over residues 1677–1698 the composition is skewed to low complexity; the sequence is GAAKGAVAAPAPAKKMVEPVKA. Positions 1708–1723 are enriched in pro residues; the sequence is AAPPSPSKAAPPPAPK. The segment covering 1724–1734 has biased composition (low complexity); that stretch reads PAALKASVPKA. Carrier domains are found at residues 1733–1812, 1877–1953, and 2020–2099; these read KADP…AGAA, SKVF…GGSG, and VART…TGSS. Residues Ser1770, Ser1911, and Ser2057 each carry the O-(pantetheine 4'-phosphoryl)serine modification. Low complexity predominate over residues 2098 to 2115; sequence SSADSDSSSVASNPADPA. The disordered stretch occupies residues 2098 to 2149; that stretch reads SSADSDSSSVASNPADPAATPPRSESSDTEPDDEAPSKPKSGPGSTDSCRST. Positions 2140–2149 are enriched in polar residues; that stretch reads PGSTDSCRST. The thioesterase/Claisen cyclase (TE/CLC) domain stretch occupies residues 2164–2393; it reads TLFLLPDGGG…KARVNYVSDL (230 aa). Residue Ser2234 is the For thioesterase activity of the active site.

Requires pantetheine 4'-phosphate as cofactor.

The catalysed reaction is hexanoyl-[ACP] + 7 malonyl-CoA + 6 H(+) = noranthrone + holo-[ACP] + 7 CO2 + 7 CoA + 2 H2O. It functions in the pathway mycotoxin biosynthesis. Functionally, polyketide synthase; part of the fragmented gene cluster that mediates the biosynthesis of dothistromin (DOTH), a polyketide toxin very similar in structure to the aflatoxin precursor, versicolorin B. The first step of the pathway is the conversion of acetate to norsolorinic acid (NOR) and requires the fatty acid synthase subunits hexA and hexB, as well as the polyketide synthase pksA. PksA combines a hexanoyl starter unit and 7 malonyl-CoA extender units to synthesize the precursor NOR. The hexanoyl starter unit is provided to the acyl-carrier protein (ACP) domain by the fungal fatty acid synthase hexA/hexB. The second step is the conversion of NOR to averantin (AVN) and requires the norsolorinic acid ketoreductase nor1, which catalyzes the dehydration of norsolorinic acid to form (1'S)-averantin. The cytochrome P450 monooxygenase avnA then catalyzes the hydroxylation of AVN to 5'hydroxyaverantin (HAVN). The next step is performed by adhA that transforms HAVN to averufin (AVF). Averufin might then be converted to hydroxyversicolorone by cypX and avfA. Hydroxyversicolorone is further converted versiconal hemiacetal acetate (VHA) by moxY. VHA is then the substrate for the versiconal hemiacetal acetate esterase est1 to yield versiconal (VAL). Versicolorin B synthase vbsA then converts VAL to versicolorin B (VERB) by closing the bisfuran ring. Then, the activity of the versicolorin B desaturase verB leads to versicolorin A (VERA). DotB, a predicted chloroperoxidase, may perform epoxidation of the A-ring of VERA. Alternatively, a cytochrome P450, such as cypX or avnA could catalyze this step. It is also possible that another, uncharacterized, cytochrome P450 enzyme is responsible for this step. Opening of the epoxide could potentially be achieved by the epoxide hydrolase epoA. However, epoA seems not to be required for DOTH biosynthesis, but other epoxide hydrolases may have the ability to complement this hydrolysis. Alternatively, opening of the epoxide ring could be achieved non-enzymatically. The next step is the deoxygenation of ring A to yield the 5,8-dihydroxyanthraquinone which is most likely catalyzed by the NADPH dehydrogenase encoded by ver1. The last stages of DOTH biosynthesis are proposed to involve hydroxylation of the bisfuran. OrdB and norB might have oxidative roles here. An alternative possibility is that cytochrome P450 monoogenases such as avnA and cypX might perform these steps in addition to previously proposed steps. This Dothistroma septosporum (Red band needle blight fungus) protein is Norsolorinic acid synthase.